A 313-amino-acid chain; its full sequence is Methionyl-tRNA formyltransferase (313 aa).

The segment at 32 to 51 (QPDRRKGRGKELQPPPAKRK) is disordered. Residue 109–112 (SLLP) participates in (6S)-5,6,7,8-tetrahydrofolate binding.

This sequence belongs to the Fmt family.

It carries out the reaction L-methionyl-tRNA(fMet) + (6R)-10-formyltetrahydrofolate = N-formyl-L-methionyl-tRNA(fMet) + (6S)-5,6,7,8-tetrahydrofolate + H(+). Its function is as follows. Attaches a formyl group to the free amino group of methionyl-tRNA(fMet). The formyl group appears to play a dual role in the initiator identity of N-formylmethionyl-tRNA by promoting its recognition by IF2 and preventing the misappropriation of this tRNA by the elongation apparatus. The sequence is that of Methionyl-tRNA formyltransferase from Natranaerobius thermophilus (strain ATCC BAA-1301 / DSM 18059 / JW/NM-WN-LF).